The chain runs to 640 residues: ATP-dependent DNA helicase YoaA (640 aa).

Positions 16 to 278 (ELSQNIKGFR…KDMQQLGTTS (263 aa)) constitute a Helicase ATP-binding domain. ATP is bound at residue 51-58 (AGTGTGKT). Cys-114 contributes to the [4Fe-4S] cluster binding site. A DEAH box motif is present at residues 125 to 128 (GVLG). The [4Fe-4S] cluster site is built by Cys-174, Cys-179, and Cys-185. Positions 231–234 (DEAH) match the DEAH box motif. The region spanning 458–634 (SLGEILLPVI…SRTRDLNKVI (177 aa)) is the Helicase C-terminal domain.

This sequence belongs to the helicase family. DinG subfamily. It depends on [4Fe-4S] cluster as a cofactor.

It catalyses the reaction Couples ATP hydrolysis with the unwinding of duplex DNA at the replication fork by translocating in the 5'-3' direction. This creates two antiparallel DNA single strands (ssDNA). The leading ssDNA polymer is the template for DNA polymerase III holoenzyme which synthesizes a continuous strand.. The catalysed reaction is ATP + H2O = ADP + phosphate + H(+). Functionally, probably a 5'-3' DNA helicase. This is ATP-dependent DNA helicase YoaA from Haemophilus influenzae (strain ATCC 51907 / DSM 11121 / KW20 / Rd).